A 2569-amino-acid chain; its full sequence is Highly reducing polyketide synthase pks5 (2569 aa).

The interval 1 to 25 is disordered; that stretch reads MVVKFANGVRNRGNGDEGQRGTQRP. The Ketosynthase family 3 (KS3) domain occupies 27–452; it reads STPIAIVGMS…GTNVHVIMEA (426 aa). Residues Cys200, His335, and His375 each act as for beta-ketoacyl synthase activity in the active site. Residues 572–892 are malonyl-CoA:ACP transacylase (MAT) domain; it reads IFNGQGAQWY…PYLSCLRRNI (321 aa). Residues 960–1097 are N-terminal hotdog fold; sequence HELLGSSVPG…GYVSAEDSSK (138 aa). Positions 960–1268 are dehydratase (DH) domain; sequence HELLGSSVPG…LRLQKIQAED (309 aa). Residues 960 to 1270 enclose the PKS/mFAS DH domain; that stretch reads HELLGSSVPG…LQKIQAEDDN (311 aa). The active-site Proton acceptor; for dehydratase activity is His992. The interval 1117–1270 is C-terminal hotdog fold; the sequence is RVRHVRPDAM…LQKIQAEDDN (154 aa). The Proton donor; for dehydratase activity role is filled by Asp1179. A methyltransferase (CMet) domain region spans residues 1457–1567; the sequence is LEVGAGTGGA…RKLLKPKGKL (111 aa). An enoyl reductase (ER) domain region spans residues 1855–2170; sequence DLLNKIEFLE…SGTHMGKIVL (316 aa). Residues 2195–2371 are ketoreductase (KR) domain; that stretch reads THLIVGGLRG…AISINLGPVD (177 aa). The region spanning 2485-2562 is the Carrier domain; that stretch reads AARKLVSELI…DFAALVASRS (78 aa). Ser2522 is modified (O-(pantetheine 4'-phosphoryl)serine).

Its function is as follows. Highly reducing polyketide synthase; part of the gene cluster that mediates the biosynthesis of abscisic acid (ABA), a phytohormone that acts antagonistically toward salicylic acid (SA), jasmonic acid (JA) and ethylene (ETH) signaling, to impede plant defense responses. The first step of the pathway catalyzes the reaction from farnesyl diphosphate to alpha-ionylideneethane performed by the alpha-ionylideneethane synthase abl3 via a three-step reaction mechanism involving 2 neutral intermediates, beta-farnesene and allofarnesene. The cytochrome P450 monooxygenase abl1 might then be involved in the conversion of alpha-ionylideneethane to alpha-ionylideneacetic acid. Alpha-ionylideneacetic acid is further converted to abscisic acid in 2 steps involving the cytochrome P450 monooxygenase abl2 and the short-chain dehydrogenase/reductase abl4, via the intermediates 1'-deoxy-ABA or 1',4'-trans-diol-ABA, depending on the order of action of these 2 enzymes. Abl2 is responsible for the hydroxylation of carbon atom C-1' and abl4 might be involved in the oxidation of the C-4' carbon atom. Pks5 is clearly not involved in the production of ABA. Nonetheless, the possibility cannot be excluded that pks5 may modify ABA into another compound. It also cannot be excluded the possibility that pks5 also has a function completely independent of ABA synthesis. Pks5 is not required for pathogenicity on B.napus cotyledon. The polypeptide is Highly reducing polyketide synthase pks5 (Leptosphaeria maculans (strain JN3 / isolate v23.1.3 / race Av1-4-5-6-7-8) (Blackleg fungus)).